The chain runs to 188 residues: UPF0200 protein M1627_1244 (188 aa).

15–22 (GMPGSGKS) is an ATP binding site.

The protein belongs to the UPF0200 family.

The chain is UPF0200 protein M1627_1244 from Saccharolobus islandicus (strain M.16.27) (Sulfolobus islandicus).